The following is a 505-amino-acid chain: Maturase K (505 aa).

It belongs to the intron maturase 2 family. MatK subfamily.

The protein resides in the plastid. Its subcellular location is the chloroplast. In terms of biological role, usually encoded in the trnK tRNA gene intron. Probably assists in splicing its own and other chloroplast group II introns. The polypeptide is Maturase K (Sciadopitys verticillata (Japanese umbrella-pine)).